A 220-amino-acid polypeptide reads, in one-letter code: MKKEKAVVVFSGGQDSTTCLFWAIEQFAEVEAVTFNYNQRHKLEIDCAAEIAKELGIKHTVLDMSLLNQLAPNALTRTDMEITHEEGELPSTFVDGRNLLFLSFAAVLAKQVGARHIVTGVCETDFSGYPDCRDVFVKSLNVTLNLSMDYPFVIHTPLMWIDKAETWKLSDELGAFEFVREKTLTCYNGIIGDGCGECPACQLRKAGLDTYLQEREGANN.

Phe-10–Leu-20 contacts ATP. Positions 186, 195, 198, and 201 each coordinate Zn(2+).

It belongs to the QueC family. In terms of assembly, homodimer. Zn(2+) is required as a cofactor.

The catalysed reaction is 7-carboxy-7-deazaguanine + NH4(+) + ATP = 7-cyano-7-deazaguanine + ADP + phosphate + H2O + H(+). It participates in purine metabolism; 7-cyano-7-deazaguanine biosynthesis. In terms of biological role, catalyzes the ATP-dependent conversion of 7-carboxy-7-deazaguanine (CDG) to 7-cyano-7-deazaguanine (preQ(0)). This Bacillus cereus (strain ATCC 14579 / DSM 31 / CCUG 7414 / JCM 2152 / NBRC 15305 / NCIMB 9373 / NCTC 2599 / NRRL B-3711) protein is 7-cyano-7-deazaguanine synthase.